The following is a 314-amino-acid chain: Ribosomal RNA large subunit methyltransferase F (314 aa).

Belongs to the methyltransferase superfamily. METTL16/RlmF family.

It is found in the cytoplasm. The enzyme catalyses adenosine(1618) in 23S rRNA + S-adenosyl-L-methionine = N(6)-methyladenosine(1618) in 23S rRNA + S-adenosyl-L-homocysteine + H(+). In terms of biological role, specifically methylates the adenine in position 1618 of 23S rRNA. The sequence is that of Ribosomal RNA large subunit methyltransferase F from Flavobacterium psychrophilum (strain ATCC 49511 / DSM 21280 / CIP 103535 / JIP02/86).